We begin with the raw amino-acid sequence, 371 residues long: Antibiotic efflux pump periplasmic linker protein ArpA (371 aa).

The signal sequence occupies residues 1 to 22; the sequence is MQFKPAVTALVSAVALATLLSG. C23 carries the N-palmitoyl cysteine lipid modification. Residue C23 is the site of S-diacylglycerol cysteine attachment. Positions 115–155 form a coiled coil; that stretch reads LAERYKQLIDEQAVSKQEYDDANAKRLQAEASLKSAQIDLR.

This sequence belongs to the membrane fusion protein (MFP) (TC 8.A.1) family.

It is found in the cell inner membrane. The periplasmic linker protein component of an antibiotic efflux pump. Confers resistance to numerous structurally unrelated antibiotics such as carbenicillin, chloramphenicol, erythromycin, novobiocin, streptomycin and tetracycline. Is not involved in organic solvent efflux. The polypeptide is Antibiotic efflux pump periplasmic linker protein ArpA (arpA) (Pseudomonas putida (Arthrobacter siderocapsulatus)).